We begin with the raw amino-acid sequence, 292 residues long: Medium chain reductase/dehydrogenase ucsI (292 aa).

Cys-43 provides a ligand contact to Zn(2+). Tyr-49 is a substrate binding site. Zn(2+) is bound by residues His-65 and Glu-66. Residues 184–189 (GCGPVG), Asp-208, Arg-213, and 276–278 (IGA) each bind NAD(+).

Belongs to the zinc-containing alcohol dehydrogenase family. Requires Zn(2+) as cofactor.

It functions in the pathway mycotoxin biosynthesis. Functionally, medium chain reductase/dehydrogenase; part of the gene cluster that mediates the biosynthesis of UCS1025A, a member of the pyrrolizidinone family that acts as a strong telomerase inhibitor and displays potent antibacterial and antitumor properties. These compounds share a hemiaminal-containing pyrrolizidinone core fused with a gamma-lactone, giving a furopyrrolizidine that is connected to a decalin fragment. The polyketide synthase module (PKS) of the PKS-NRPS ucsA is responsible for the synthesis of the polyketide backbone via the condensation of an acetyl-CoA starter unit with 6 malonyl-CoA units. The downstream nonribosomal peptide synthetase (NRPS) module then amidates the carboxyl end of the polyketide with a 2S,3S-methylproline derived from L-isoleucine by the 2-oxoglutarate-dependent dioxygenase ucsF which converts L-isoleucine to (4S,5S)-4-methylpyrroline-5-carboxylate that is further converted to 2S,3S-methylproline by the pyrroline-5-carboxylate reductase ucsG. Reductive release of the completed aminoacyl polyketide from the assembly line can form the 3-pyrrolin-2-one structure via an intramolecular Knoevenagel reaction. Because ucsA lacks a designated enoylreductase (ER) domain, the required activity is provided the enoyl reductase ucsL. This keto acyclic precursor is the substrate of the Diels-Alderase ucsH, that catalyzes the Diels-Alder cycloaddition. Oxidation of the 3S-methyl group to a carboxylate by the cytochrome P450 monooxygenase ucsK allows an oxa-Michael cyclization that might involve the reductase/dehydrogenase ucsI and which furnishes the furopyrrolizidine. The oxidase ucsJ likely plays a critical role in stereoselective reduction of the C5-C6 double bond to afford the required R-configured carboxylate group. Further enolization and oxidation at C5 by an unidentified enzyme affords the last intermediate that can undergo oxa-Michael cyclization to yield UCS1025A. This is Medium chain reductase/dehydrogenase ucsI from Acremonium sp.